The chain runs to 210 residues: Large ribosomal subunit protein bL25 (210 aa).

A disordered region spans residues 191-210; that stretch reads KPAPKAAETDEDGEEAASEE. The segment covering 199 to 210 has biased composition (acidic residues); that stretch reads TDEDGEEAASEE.

The protein belongs to the bacterial ribosomal protein bL25 family. CTC subfamily. In terms of assembly, part of the 50S ribosomal subunit; part of the 5S rRNA/L5/L18/L25 subcomplex. Contacts the 5S rRNA. Binds to the 5S rRNA independently of L5 and L18.

In terms of biological role, this is one of the proteins that binds to the 5S RNA in the ribosome where it forms part of the central protuberance. The chain is Large ribosomal subunit protein bL25 from Alteromonas mediterranea (strain DSM 17117 / CIP 110805 / LMG 28347 / Deep ecotype).